The following is a 436-amino-acid chain: Histone acetyltransferase RTT109 (436 aa).

The Rtt109-type HAT domain maps to serine 2–histidine 404. Acetyl-CoA-binding positions include alanine 88 to threonine 90 and arginine 97 to arginine 101. Residues arginine 128–arginine 170 form an interaction with VPS75 region. Acetyl-CoA is bound by residues phenylalanine 192, alanine 196, histidine 211–leucine 213, and tryptophan 221. Aspartate 288 serves as the catalytic Proton donor/acceptor. The residue at position 290 (lysine 290) is an N6-acetyllysine; by autocatalysis. The interaction with ASF1 stretch occupies residues leucine 419–leucine 433.

Belongs to the RTT109 family. In terms of assembly, forms a complex composed of two RTT109 subunits and one VPS75 homodimer; each RTT109 subunit interacts predominantly with VPS75 instead of interacting with the other RTT109 subunit. Interacts with VPS75; the interaction is direct. Interacts (via C-terminus) with ASF1; the interaction is direct. Interacts with histone H3/H4 heterodimers via histone H3.

It localises to the nucleus. The enzyme catalyses L-lysyl-[histone] + acetyl-CoA = N(6)-acetyl-L-lysyl-[histone] + CoA + H(+). It catalyses the reaction L-lysyl-[protein] + acetyl-CoA = N(6)-acetyl-L-lysyl-[protein] + CoA + H(+). Functionally, histone chaperone-dependent acetylase that modifies 'Lys-9', 'Lys-14', 'Lys-23', 'Lys-27', and 'Lys-56' on histone H3 (H3K9Ac, H3K14Ac and H3K23Ac, H3K27Ac, and H3K56Ac) to promote nucleosome assembly, genomic stability, DNA repair and transcriptional regulation during mitotic S-phase. Its residue selectivity is influenced by the acetylation status of histone H3, and also the presence of histone chaperone ASF1 that shifts selectivity to 'Lys-56' when H3K14Ac is already present. H3K56 acetylation weakens the interaction between the histone core and the surrounding DNA in the nucleosomal particle and drives chromatin disassembly. Autoacetylates. Independently of acetyltransferase activity, stimulates histone deposition by VPS75. Involved in regulation of Ty1 transposition. In Saccharomyces cerevisiae (strain ATCC 204508 / S288c) (Baker's yeast), this protein is Histone acetyltransferase RTT109.